A 545-amino-acid chain; its full sequence is CTP synthase (545 aa).

Residues 1-266 (MTTNYIFVTG…DDYICKRFSL (266 aa)) are amidoligase domain. Ser-14 is a CTP binding site. Residue Ser-14 coordinates UTP. Residues 15-20 (SLGKGI) and Asp-72 contribute to the ATP site. Residues Asp-72 and Glu-140 each coordinate Mg(2+). Residues 147–149 (DIE), 187–192 (KTKPTQ), and Lys-223 contribute to the CTP site. UTP contacts are provided by residues 187-192 (KTKPTQ) and Lys-223. 239-241 (KDV) lines the ATP pocket. Residues 291-542 (TIGMVGKYIE…VKAASEHQKR (252 aa)) form the Glutamine amidotransferase type-1 domain. Gly-352 lines the L-glutamine pocket. The active-site Nucleophile; for glutamine hydrolysis is Cys-379. Residues 380–383 (LGMQ), Glu-403, and Arg-470 each bind L-glutamine. Active-site residues include His-515 and Glu-517.

The protein belongs to the CTP synthase family. In terms of assembly, homotetramer.

It carries out the reaction UTP + L-glutamine + ATP + H2O = CTP + L-glutamate + ADP + phosphate + 2 H(+). It catalyses the reaction L-glutamine + H2O = L-glutamate + NH4(+). The catalysed reaction is UTP + NH4(+) + ATP = CTP + ADP + phosphate + 2 H(+). The protein operates within pyrimidine metabolism; CTP biosynthesis via de novo pathway; CTP from UDP: step 2/2. Its activity is regulated as follows. Allosterically activated by GTP, when glutamine is the substrate; GTP has no effect on the reaction when ammonia is the substrate. The allosteric effector GTP functions by stabilizing the protein conformation that binds the tetrahedral intermediate(s) formed during glutamine hydrolysis. Inhibited by the product CTP, via allosteric rather than competitive inhibition. Functionally, catalyzes the ATP-dependent amination of UTP to CTP with either L-glutamine or ammonia as the source of nitrogen. Regulates intracellular CTP levels through interactions with the four ribonucleotide triphosphates. In Salmonella arizonae (strain ATCC BAA-731 / CDC346-86 / RSK2980), this protein is CTP synthase.